The chain runs to 26 residues: Coenzyme PQQ synthesis protein A (26 aa).

The segment at residues glutamate 16–tyrosine 20 is a cross-link (pyrroloquinoline quinone (Glu-Tyr)).

It belongs to the PqqA family.

Its pathway is cofactor biosynthesis; pyrroloquinoline quinone biosynthesis. Functionally, required for coenzyme pyrroloquinoline quinone (PQQ) biosynthesis. PQQ is probably formed by cross-linking a specific glutamate to a specific tyrosine residue and excising these residues from the peptide. The chain is Coenzyme PQQ synthesis protein A from Gluconacetobacter diazotrophicus (strain ATCC 49037 / DSM 5601 / CCUG 37298 / CIP 103539 / LMG 7603 / PAl5).